The sequence spans 157 residues: Cyclic pyranopterin monophosphate synthase (157 aa).

Substrate-binding positions include 74 to 76 (MCH) and 112 to 113 (ME). Residue D127 is part of the active site.

Belongs to the MoaC family. In terms of assembly, homohexamer; trimer of dimers.

It catalyses the reaction (8S)-3',8-cyclo-7,8-dihydroguanosine 5'-triphosphate = cyclic pyranopterin phosphate + diphosphate. Its pathway is cofactor biosynthesis; molybdopterin biosynthesis. Functionally, catalyzes the conversion of (8S)-3',8-cyclo-7,8-dihydroguanosine 5'-triphosphate to cyclic pyranopterin monophosphate (cPMP). The sequence is that of Cyclic pyranopterin monophosphate synthase from Campylobacter jejuni subsp. jejuni serotype O:6 (strain 81116 / NCTC 11828).